The sequence spans 716 residues: Zinc finger CCCH domain-containing protein 30 (716 aa).

ANK repeat units follow at residues 90–120 and 125–157; these read DYRT…DVNR and DQTT…DLNL. The interval 201–231 is disordered; it reads VTNVPNRSSSPCHSPTGENGGSGSGSPLGSP. Residues 203–213 show a composition bias toward polar residues; the sequence is NVPNRSSSPCH. 2 C3H1-type zinc fingers span residues 306 to 328 and 336 to 360; these read PCPD…HGVF and QYRT…HTPE. Residues 521 to 562 form a disordered region; that stretch reads FQQQQQQQQSMLSPINTSFSSPKSVDHSLFSGGGRMSPRNVV. A compositionally biased stretch (polar residues) spans 530–543; the sequence is SMLSPINTSFSSPK. Residue S566 is modified to Phosphoserine. Residues 583 to 594 show a composition bias toward low complexity; the sequence is QQQQQQQQQQHQ. Disordered regions lie at residues 583-638 and 667-692; these read QQQQ…MSSE and PAEA…PVEP. Polar residues predominate over residues 605 to 630; that stretch reads TNSSPIVGSPVNNNTWSSKWGSSNGQ.

The chain is Zinc finger CCCH domain-containing protein 30 from Arabidopsis thaliana (Mouse-ear cress).